A 113-amino-acid polypeptide reads, in one-letter code: Protein RALF-like 31 (113 aa).

The signal sequence occupies residues 1–21 (MFNSTALVIFAILFLLISADA). The propeptide at 22-58 (FPIPSPNGEIDAMLIRNSIIGEDEDLMPTEISRRVLM) is removed in mature form. Intrachain disulfides connect Cys-76–Cys-86 and Cys-98–Cys-104.

Belongs to the plant rapid alkalinization factor (RALF) family. Post-translationally, proteolytically cleaved, probably by S1P, a subtilisin-like serine protease (subtilase).

The protein resides in the secreted. Its function is as follows. Cell signaling peptide that may regulate plant stress, growth, and development. Mediates a rapid alkalinization of extracellular space by mediating a transient increase in the cytoplasmic Ca(2+) concentration leading to a calcium-dependent signaling events through a cell surface receptor and a concomitant activation of some intracellular mitogen-activated protein kinases. This chain is Protein RALF-like 31 (RALFL31), found in Arabidopsis thaliana (Mouse-ear cress).